A 176-amino-acid chain; its full sequence is Inner membrane-spanning protein YciB (176 aa).

The next 5 helical transmembrane spans lie at 3 to 23 (FLFD…WGIF), 49 to 69 (TMLW…LVLH), 72 to 92 (KFIQ…LVAA), 118 to 138 (KLNL…LYVV), and 149 to 169 (FKLF…SLWL).

It belongs to the YciB family.

It is found in the cell inner membrane. Plays a role in cell envelope biogenesis, maintenance of cell envelope integrity and membrane homeostasis. This chain is Inner membrane-spanning protein YciB, found in Burkholderia thailandensis (strain ATCC 700388 / DSM 13276 / CCUG 48851 / CIP 106301 / E264).